Here is a 258-residue protein sequence, read N- to C-terminus: Malonyl-[acyl-carrier protein] O-methyltransferase (258 aa).

This sequence belongs to the methyltransferase superfamily.

It catalyses the reaction malonyl-[ACP] + S-adenosyl-L-methionine = malonyl-[ACP] methyl ester + S-adenosyl-L-homocysteine. It participates in cofactor biosynthesis; biotin biosynthesis. Its function is as follows. Converts the free carboxyl group of a malonyl-thioester to its methyl ester by transfer of a methyl group from S-adenosyl-L-methionine (SAM). It allows to synthesize pimeloyl-ACP via the fatty acid synthetic pathway. This is Malonyl-[acyl-carrier protein] O-methyltransferase from Hamiltonella defensa subsp. Acyrthosiphon pisum (strain 5AT).